The primary structure comprises 323 residues: tRNA U34 carboxymethyltransferase (323 aa).

Residues lysine 91, tryptophan 105, lysine 110, glycine 130, 152 to 154 (DPS), 181 to 182 (IE), methionine 196, tyrosine 200, and arginine 315 contribute to the carboxy-S-adenosyl-L-methionine site.

This sequence belongs to the class I-like SAM-binding methyltransferase superfamily. CmoB family. In terms of assembly, homotetramer.

It catalyses the reaction carboxy-S-adenosyl-L-methionine + 5-hydroxyuridine(34) in tRNA = 5-carboxymethoxyuridine(34) in tRNA + S-adenosyl-L-homocysteine + H(+). In terms of biological role, catalyzes carboxymethyl transfer from carboxy-S-adenosyl-L-methionine (Cx-SAM) to 5-hydroxyuridine (ho5U) to form 5-carboxymethoxyuridine (cmo5U) at position 34 in tRNAs. This chain is tRNA U34 carboxymethyltransferase, found in Vibrio campbellii (strain ATCC BAA-1116).